Reading from the N-terminus, the 134-residue chain is Replication enhancer protein (134 aa).

The protein belongs to the geminiviridae replication enhancer protein family. In terms of assembly, homooligomer. Interacts with the replication-associated protein (REP). Interacts with host proliferating cell nuclear antigen (PCNA). Interacts with host retinoblastoma-related protein 1 (RBR1), and may thereby deregulate the host cell cycle. Oligomerization and interaction with PCNA are necessary for optimal replication enhancement.

Functionally, increases viral DNA accumulation. Enhances infectivity and symptom expression. This chain is Replication enhancer protein, found in Squash leaf curl virus (SLCV).